The primary structure comprises 184 residues: UPF0669 protein C6orf120 homolog (184 aa).

An N-terminal signal peptide occupies residues 1–23; that stretch reads MAAPWTGALLLLLASQAVSSAQA. Residue Asn-47 is glycosylated (N-linked (GlcNAc...) asparagine).

The protein belongs to the UPF0669 family.

The protein resides in the secreted. May be involved in induction of apoptosis in CD4(+) T-cells, but not CD8(+) T-cells or hepatocytes. The chain is UPF0669 protein C6orf120 homolog from Bos taurus (Bovine).